A 185-amino-acid chain; its full sequence is Threonylcarbamoyl-AMP synthase (185 aa).

In terms of domain architecture, YrdC-like spans 4 to 185 (SWRVQQAARE…LATGEVVRPG (182 aa)).

The protein belongs to the SUA5 family. TsaC subfamily.

It is found in the cytoplasm. It carries out the reaction L-threonine + hydrogencarbonate + ATP = L-threonylcarbamoyladenylate + diphosphate + H2O. Its function is as follows. Required for the formation of a threonylcarbamoyl group on adenosine at position 37 (t(6)A37) in tRNAs that read codons beginning with adenine. Catalyzes the conversion of L-threonine, HCO(3)(-)/CO(2) and ATP to give threonylcarbamoyl-AMP (TC-AMP) as the acyladenylate intermediate, with the release of diphosphate. The chain is Threonylcarbamoyl-AMP synthase from Pseudomonas entomophila (strain L48).